A 662-amino-acid chain; its full sequence is MNNFSIISAYKPAGGQPKAIDEIIAGLNSKKRSQMLLGITGSGKTFTMANIIERTNRPTLIMAHNKTLAAQIYLEMKSIFPKNAVEYFVSYYDYYQPEAYIVRTDTFIEKDSSINEQIDLMRHSATRSLLERRDVIVIASVSCIYGLGAPDLYYQMTVHLELGQSYPRDKLLNDLINLQYKRNDIGFERGCFRVKGDHIDIFPSHYSDKAWRLSFFGNELEYIHEFDPLTGEKLTQLDKAMVFGNSHFVMPQKTINNAISSIEVELQKHLDVLKSQDKLIEAKRLNQRTQYDLEMLTETGSCKGIENYSRFFTGRNAGEPPPTLFEYLPKDALLFLDESHVSIPQIRAMYNSDRARKEVLVEHGFRLPSALDNRPLKFEEWEKFRPQTVFVSATPGPFELEETGGTVVELIIRPTGLLDPECIIKPATNQVEDLISEIQTTITKGLRILVTTLTKKMAEDLTSYLQDLQYKTYYLHSNIHTLERIEILRDLRQGNIDILVGINLLREGIDIPECGLVAILDADKEGFLRSEVSLIQTIGRAARNSRGKVILYADKMTKSIDKAVSETLRRRQIQQEYNKKYGIIPKTINSAIHTLESLEEIHDNKLDKKQTNTLLNNPAKLKSYMDKLKKEMFKAASNLEFEQAAKLRNQLKTLEKAVLELS.

Positions 25 to 414 (AGLNSKKRSQ…GTVVELIIRP (390 aa)) constitute a Helicase ATP-binding domain. An ATP-binding site is contributed by 38–45 (GITGSGKT). A Beta-hairpin motif is present at residues 91–114 (YYDYYQPEAYIVRTDTFIEKDSSI). The region spanning 430–592 (QVEDLISEIQ…IIPKTINSAI (163 aa)) is the Helicase C-terminal domain. The UVR domain maps to 622–657 (KSYMDKLKKEMFKAASNLEFEQAAKLRNQLKTLEKA).

Belongs to the UvrB family. Forms a heterotetramer with UvrA during the search for lesions. Interacts with UvrC in an incision complex.

Its subcellular location is the cytoplasm. Its function is as follows. The UvrABC repair system catalyzes the recognition and processing of DNA lesions. A damage recognition complex composed of 2 UvrA and 2 UvrB subunits scans DNA for abnormalities. Upon binding of the UvrA(2)B(2) complex to a putative damaged site, the DNA wraps around one UvrB monomer. DNA wrap is dependent on ATP binding by UvrB and probably causes local melting of the DNA helix, facilitating insertion of UvrB beta-hairpin between the DNA strands. Then UvrB probes one DNA strand for the presence of a lesion. If a lesion is found the UvrA subunits dissociate and the UvrB-DNA preincision complex is formed. This complex is subsequently bound by UvrC and the second UvrB is released. If no lesion is found, the DNA wraps around the other UvrB subunit that will check the other stand for damage. The sequence is that of UvrABC system protein B from Rickettsia typhi (strain ATCC VR-144 / Wilmington).